A 381-amino-acid polypeptide reads, in one-letter code: MSLNLFWFLPTHGDGHYLGTEEGARPVDYGYLQQIAQAADRIGFTGVLIPTGRSCEDAWLVAAAMIPVTQRLKFLVALRPSVVSPTVAARQAATLDRLSNGRALFNLVTGSDPTELAGDGVFLDHTERYEASAEFTRVWRRLLEGDTVTYEGKHIRVRDAKLYFPPVQQPRPPLYFGGSSDVAQDLAAEQVDLYLTWGEPPEQVKEKIEQVRAKAAAHGRKVRFGIRLHVIVRETNQEAWQAADRLISHLDDDTIAKAQAALAKTDSVGQHRMASLHNGKRENLEISPNLWAGVGLVRGGAGTALVGDGPTVAARINEYADLGIDSFILSGYPHLEEAYNVGELLFPHLDVAIPEIPQPRPLQVQGEAVANEFIPRKTAQS.

It belongs to the SsuD family. Homotetramer.

It carries out the reaction an alkanesulfonate + FMNH2 + O2 = an aldehyde + FMN + sulfite + H2O + 2 H(+). In terms of biological role, catalyzes the desulfonation of aliphatic sulfonates. This chain is Alkanesulfonate monooxygenase, found in Enterobacter sp. (strain 638).